An 887-amino-acid polypeptide reads, in one-letter code: MMKNNLVSNLRKSFIDFFAKNGHQVFPSSPLILKDDPSLLFTNAGMVQFKQMFTNPNNANVNTATSSQKCLRVGGKHNDLENVGYTNRHHTFFEMLGNFSFGSYFKEGAIEFAWNFVIKELSLSKDRLYFTVYHDDQEAFDLWKKISGVSDSRIIKITTSDNFWSMGNTGPCGPCSEIFYDYGDNVKGGLPGTPEEDGARFTEIWNLVFMQYDRKLDGELCVLPKKCIDTGMGLERIAAVMQGVHDNYDISLFKALIAASKEQSGNSTNELAHRVIADHVRSAAFLIAEGLTPGNEGRNYILRRIIRRAARYVYMLKYDDALMYKVFPTLIDEESCGYMADYYPELIHAKDLIMSILKIEEENFKDTLVRALPLLEKELMNLSSGDILSGDIVFKLYDTYGFPVDITLDIIKEKGVKFDEQGFYDNMNKQKERSKLNHSIKSDQQLKEEFWVDIKERCGSTKFVGYERYDTKATVLSIVCGGDKNVEIANVGDKVSILLDITPFYAESGGQKGDVGIFNVIVRQEKELFANDNIAEVIDTKKVLDTLYIHECIIKQGSLMVGDVIFAKIDCERRRNLCANHSATHLLHYVLKSEIDSSIMQKGSLVSDEKLRFDFSYGVALTKEQLTLIEDKMYSLISGNNPVISHVCDLKDAVAGGAVALFTEKYEEHGVRVVSIKDSKELCCGTHVKYTSEIGCFKIVSEASIACGIRRIEAVTGRYAIDYFRQQEKMLNSIAESVKVPVDNVLVQIDKLDKKNQELEQKLSDVYFDMINLQGVNTEKIGNVDFLYSNLSNIPVNVMRKFINKHLTADRIILFANVVGQNVVCVVGVGNSLHCKVKAVDFVKMIGTMVKSKGGGNAQLAQINGEYVKEIDIMSNVKSKLVDILSN.

Positions 581, 585, 683, and 687 each coordinate Zn(2+).

It belongs to the class-II aminoacyl-tRNA synthetase family. It depends on Zn(2+) as a cofactor.

It is found in the cytoplasm. The enzyme catalyses tRNA(Ala) + L-alanine + ATP = L-alanyl-tRNA(Ala) + AMP + diphosphate. In terms of biological role, catalyzes the attachment of alanine to tRNA(Ala) in a two-step reaction: alanine is first activated by ATP to form Ala-AMP and then transferred to the acceptor end of tRNA(Ala). Also edits incorrectly charged Ser-tRNA(Ala) and Gly-tRNA(Ala) via its editing domain. In Ehrlichia chaffeensis (strain ATCC CRL-10679 / Arkansas), this protein is Alanine--tRNA ligase.